A 177-amino-acid polypeptide reads, in one-letter code: FMRFamide-like neuropeptides 7 (177 aa).

An N-terminal signal peptide occupies residues 1-19 (MLGSRFLLLALGLLVLVLA). Positions 20–49 (EESAEQQVQEPTELEKSGEQLSEEDLIDEQ) are excised as a propeptide. The interval 25-106 (QQVQEPTELE…RSSMVRFGKR (82 aa)) is disordered. Phenylalanine amide occurs at positions 62, 75, 89, 103, 117, and 130. A Leucine amide modification is found at Leu-143. Residue Phe-157 is modified to Phenylalanine amide. The propeptide occupies 161–177 (SMEFEMQSNEKNIEDSE).

This sequence belongs to the FARP (FMRFamide related peptide) family. In terms of tissue distribution, expressed in the ASI sensory neurons, the ALA interneuron and the AVG interneuron from where secretion occurs. Expression in the ASI neurons is necessary and sufficient to maintain serotonin-induced fat loss.

The protein localises to the secreted. Its function is as follows. FMRFamide-like neuropeptides. Stimulates serotonin-induced fat loss by binding to and activating the npr-22 receptor which leads to induction of the atgl-1 lipase and subsequent fat loss. Together with atfs-1, negatively regulates the expression of the transcription regulator hlh-11, to promote expression of atgl-1, and thus atgl-1-dependent fat oxidation in response to mitochondrial stress. Functionally, TPMQRSSMVRF-amide: Acts as a ligand for the npr-22 receptor in vitro. In terms of biological role, SPMQRSSMVRF-amide: Acts as a ligand for the npr-22 receptor in vitro. Acts as a ligand for the npr-22 receptor in vitro. In Caenorhabditis elegans, this protein is FMRFamide-like neuropeptides 7.